The sequence spans 211 residues: Transmembrane protein 247 (211 aa).

2 stretches are compositionally biased toward basic and acidic residues: residues 1 to 10 (MAMEDREVME) and 31 to 45 (PEGKPKASLDAEVPK). Residues 1–90 (MAMEDREVME…AGDGPGLESV (90 aa)) are disordered. Pro residues predominate over residues 63–73 (PGPPRSLPPKS). Residues 119–148 (KYLHQENERQRQHEEVMEQLQQQQQQQQAL) are a coiled coil. Transmembrane regions (helical) follow at residues 159 to 179 (LLLPQNQFAMFFYCFIFIHII) and 186 to 206 (VFFLFSKHYLFCLAAILLCLI).

It is found in the membrane. The sequence is that of Transmembrane protein 247 (Tmem247) from Mus musculus (Mouse).